The following is a 279-amino-acid chain: Large ribosomal subunit protein uL3 (279 aa).

Residue Gln-151 is modified to N5-methylglutamine.

This sequence belongs to the universal ribosomal protein uL3 family. Part of the 50S ribosomal subunit. Forms a cluster with proteins L14 and L19. Methylated by PrmB.

Its function is as follows. One of the primary rRNA binding proteins, it binds directly near the 3'-end of the 23S rRNA, where it nucleates assembly of the 50S subunit. In Dinoroseobacter shibae (strain DSM 16493 / NCIMB 14021 / DFL 12), this protein is Large ribosomal subunit protein uL3.